The following is a 124-amino-acid chain: uncharacterized protein (124 aa).

A helical transmembrane segment spans residues 70–90 (LLYLALVLLLVVILSTAFFSI).

The protein localises to the membrane. This is an uncharacterized protein from Saccharomyces cerevisiae (strain ATCC 204508 / S288c) (Baker's yeast).